A 267-amino-acid polypeptide reads, in one-letter code: Imidazole glycerol phosphate synthase subunit HisF (267 aa).

Residues aspartate 21 and aspartate 140 contribute to the active site.

Belongs to the HisA/HisF family. Heterodimer of HisH and HisF.

The protein resides in the cytoplasm. It catalyses the reaction 5-[(5-phospho-1-deoxy-D-ribulos-1-ylimino)methylamino]-1-(5-phospho-beta-D-ribosyl)imidazole-4-carboxamide + L-glutamine = D-erythro-1-(imidazol-4-yl)glycerol 3-phosphate + 5-amino-1-(5-phospho-beta-D-ribosyl)imidazole-4-carboxamide + L-glutamate + H(+). The protein operates within amino-acid biosynthesis; L-histidine biosynthesis; L-histidine from 5-phospho-alpha-D-ribose 1-diphosphate: step 5/9. IGPS catalyzes the conversion of PRFAR and glutamine to IGP, AICAR and glutamate. The HisF subunit catalyzes the cyclization activity that produces IGP and AICAR from PRFAR using the ammonia provided by the HisH subunit. In Bordetella avium (strain 197N), this protein is Imidazole glycerol phosphate synthase subunit HisF.